The following is a 159-amino-acid chain: Pathogenesis-related leaf protein 6 (159 aa).

An N-terminal signal peptide occupies residues 1-24 (MGLFNISLLLTCLMVLAIFHSCEA). Glutamine 25 is modified (pyrrolidone carboxylic acid). The SCP domain maps to 32 to 147 (LAVHNDARAQ…NGWWFISCNY (116 aa)). Disulfide bonds link cysteine 68–cysteine 136, cysteine 109–cysteine 115, and cysteine 131–cysteine 145.

The protein belongs to the CRISP family.

Probably involved in the defense reaction of plants against pathogens. Has antifungal activity. The sequence is that of Pathogenesis-related leaf protein 6 (PR1B1) from Solanum lycopersicum (Tomato).